The chain runs to 309 residues: Homoserine O-succinyltransferase (309 aa).

Catalysis depends on cysteine 142, which acts as the Acyl-thioester intermediate. Positions 163 and 192 each coordinate substrate. The Proton acceptor role is filled by histidine 235. The active site involves glutamate 237. Substrate is bound at residue arginine 249.

It belongs to the MetA family.

Its subcellular location is the cytoplasm. It catalyses the reaction L-homoserine + succinyl-CoA = O-succinyl-L-homoserine + CoA. It participates in amino-acid biosynthesis; L-methionine biosynthesis via de novo pathway; O-succinyl-L-homoserine from L-homoserine: step 1/1. Functionally, transfers a succinyl group from succinyl-CoA to L-homoserine, forming succinyl-L-homoserine. In Proteus mirabilis (strain HI4320), this protein is Homoserine O-succinyltransferase.